A 596-amino-acid chain; its full sequence is MSTHAILTIVLYVGVLLLLAYPLGGFIDAVMSGQSITSKKPFRFIENFIYKVCGIDPAIEMSWLSYAIGLIAFNILGVLFVFGLQLFQGILPLNPQGLVSVSPDSSFNTAISFATNTNWQAYVGEGTMSYLTQMLGLTTQNFLSAASGIVVVIALIRGFARNSIKTIGNLWVDLTRITLYVLVPISVVYAIFLVGQGSIQNFDAYKDVKTVEVAKFDAPKLDADGQPLKDEKGAVLTGPASTDQQTLPMGPVASQEAIKMLGTNGGGFFNANSAHPYENPTPLSNFIQILSIFLIPAALCFTFGRMVRDKRQGWVVLVTMILIFLTVTFAAVHFESQANPVLTNLGVDGAMGNMEGKETRFGIDDSSIFASITTLASCGAVNSMHDSFMPMGGFVPLWNMMLGEVVFGGVGTGLYGMLVFAILAVFIAGLMIGRTPEYLGKKIESYEMKMVAIAILVTPILALVGTAIAVMSVDGVAGIANPGAHGFSEILYAFTSAANNNGSAFAGLSANTPFYNSMLAIAMWFGRFGVIVPVLALAGAFAAKKKIAVNEGTMPTHGPLFIVLLAGTVILVGALNYVPALALGPIVEQLMLPVIH.

A run of 10 helical transmembrane segments spans residues 6-26, 67-87, 136-156, 177-197, 283-303, 314-334, 413-433, 450-470, 518-538, and 560-580; these read ILTI…LGGF, AIGL…LQLF, GLTT…IALI, ITLY…VGQG, LSNF…CFTF, WVVL…AVHF, GLYG…LMIG, MVAI…AIAV, MLAI…LALA, and LFIV…YVPA.

Belongs to the KdpA family. The system is composed of three essential subunits: KdpA, KdpB and KdpC.

The protein localises to the cell inner membrane. In terms of biological role, part of the high-affinity ATP-driven potassium transport (or Kdp) system, which catalyzes the hydrolysis of ATP coupled with the electrogenic transport of potassium into the cytoplasm. This subunit binds the periplasmic potassium ions and delivers the ions to the membrane domain of KdpB through an intramembrane tunnel. The chain is Potassium-transporting ATPase potassium-binding subunit from Polynucleobacter asymbioticus (strain DSM 18221 / CIP 109841 / QLW-P1DMWA-1) (Polynucleobacter necessarius subsp. asymbioticus).